The primary structure comprises 362 residues: NAC domain-containing protein 5 (362 aa).

Residues 3-151 (NPVGFRFRPT…TYTLCKVKFK (149 aa)) form the NAC domain. Residues 107-157 (IGEKRVLVFKNHGGSKSDWAMHEYHATFSSPNQIMTYTLCKVKFKGERREF) mediate DNA binding. A disordered region spans residues 240–266 (DDRNNHTPQKPLTGVFSDHSTDGSDSD).

The protein resides in the nucleus. This Arabidopsis thaliana (Mouse-ear cress) protein is NAC domain-containing protein 5 (NAC005).